We begin with the raw amino-acid sequence, 263 residues long: Phosphoinositide-3-kinase-interacting protein 1 (263 aa).

An N-terminal signal peptide occupies residues M1–C18. Over L19–G163 the chain is Extracellular. The Kringle domain occupies D24–C99. Intrachain disulfides connect C25-C99, C46-C80, and C69-C94. N103 is a glycosylation site (N-linked (GlcNAc...) asparagine). Residues T164–I184 form a helical membrane-spanning segment. Residues T185 to A263 lie on the Cytoplasmic side of the membrane. Residues N239–A263 are disordered.

The protein localises to the cell membrane. Functionally, negative regulator of hepatic phosphatidylinositol 3-kinase (PI3K) activity. This is Phosphoinositide-3-kinase-interacting protein 1 (pik3ip1) from Danio rerio (Zebrafish).